The following is a 185-amino-acid chain: Ribosome-recycling factor (185 aa).

Belongs to the RRF family.

It localises to the cytoplasm. Responsible for the release of ribosomes from messenger RNA at the termination of protein biosynthesis. May increase the efficiency of translation by recycling ribosomes from one round of translation to another. The protein is Ribosome-recycling factor of Ectopseudomonas mendocina (strain ymp) (Pseudomonas mendocina).